The chain runs to 440 residues: MTRPCDILIQAACIVTQDAMRTVVEDGALAVADGTVLAVGPREAVTAAHAPARLLDLGNALVMPGLVNAHTHAAMTFLRGVADDLPLMDWLTQHIFPVEKHLTPDIVEAGALLGCAEMLRTGTTAFNDMYLIQDATYRAVDTAGLRCLGGEGIFGFPSPAYPDADAGLDLVRRLHETWRHNPRIRQCVTPHAVYTTSPELLQRCQALAEELDLPLHIHLAETTTETAQCQQMFGQRPVPYCHGLGLLTPRATVAHAVDLTDDEMDLLASTGAAVAHNPESNMKLASGAAPVPQMLARGIAVGIGTDGAASNNSLNMFTEMTSCAMLHKLRCMDPTCAPAQTVLDMATLGGAAALHWPGLGQLAPGCPADLTVLDLSAPNLQPMYNPASHLVYAATGHEVRLTMVAGEVLYQDGRFTRFDYPALMAQMRDVRRWVLDKLGR.

Positions 70 and 72 each coordinate Zn(2+). Substrate contacts are provided by glutamate 99 and histidine 191. Histidine 218 contributes to the Zn(2+) binding site. 2 residues coordinate substrate: glutamate 221 and aspartate 306. Aspartate 306 lines the Zn(2+) pocket.

This sequence belongs to the metallo-dependent hydrolases superfamily. MTA/SAH deaminase family. Zn(2+) is required as a cofactor.

It catalyses the reaction S-adenosyl-L-homocysteine + H2O + H(+) = S-inosyl-L-homocysteine + NH4(+). It carries out the reaction S-methyl-5'-thioadenosine + H2O + H(+) = S-methyl-5'-thioinosine + NH4(+). Its function is as follows. Catalyzes the deamination of 5-methylthioadenosine and S-adenosyl-L-homocysteine into 5-methylthioinosine and S-inosyl-L-homocysteine, respectively. Is also able to deaminate adenosine. The chain is 5-methylthioadenosine/S-adenosylhomocysteine deaminase from Nitratidesulfovibrio vulgaris (strain DSM 19637 / Miyazaki F) (Desulfovibrio vulgaris).